We begin with the raw amino-acid sequence, 536 residues long: MGASTFSQSFAEKYEAWASVMLPALVGFAFLIYQAFFAIKYPANLPLAGEPDGKRTFSWRTRWRYYTDCEALYKETYENYTKRGKTVLLPGLGFRHDIILPQSSMRDIMAHPEKELSHADAVLELVQLKYSLGHEKYKADPWPCMLVKSDINSKLEAVCDGMNEELKYAFDKYIGCDTESWKEIDLLETIRMVIIAAASRFTVGFPLCRNEAYLRACWKVNDGIMMNGGLTGATPRLLRPIFGPLITMNLRRNIEKIKKQVEPVYCQRVQALSQQNSAEKPDSEEPKDLFQQMLRYAQKERPRELHDLPSMSRRLAFANFAAVHQTTILVTNMILNIVSSDSQYNTISVLRDEVNDIIGPDSNTKWTKYKVAQMIKSDSVARETMRLHSNTNRGVFRKVLVEGIKTEDGIELPKGAYVSFLGRPLQCNPETFEDPFKYDPFRFSRVREKAPRDAKATSNLSFVSTSPEHLPFGHGGHSCPGRFLVDFEVKMIVAYLLMNYDVEFPAEYNGQRPASRWMAEALMPPSGARIRIKRRS.

The helical transmembrane segment at 20 to 39 (VMLPALVGFAFLIYQAFFAI) threads the bilayer. Cysteine 479 provides a ligand contact to heme.

The protein belongs to the cytochrome P450 family. It depends on heme as a cofactor.

It is found in the membrane. Its pathway is secondary metabolite biosynthesis; terpenoid biosynthesis. Functionally, cytochrome P450 monooxygenase; part of the gene cluster that mediates the biosynthesis of the sesquiterpenoid aspterric acid (AA), an inhibitor of dihydroxy-acid dehydratase (DHAD) effective as an herbicide. PbrC catalyzes the third and last step within the pathway and converts the alpha-epoxy carboxylate intermediate produced by the cytochrome P450 monooxygenase pbrB from (-)daucane into the tricyclic aspterric acid. This chain is Cytochrome P450 monooxygenase pbrC, found in Penicillium brasilianum.